Consider the following 408-residue polypeptide: Bifunctional polynucleotide phosphatase/kinase (408 aa).

The tract at residues 1-38 (MSSKKRKSPPQESLTSYFEKSSKSSKKYGSQNKDSDSS) is disordered. Serine 8 bears the Phosphoserine mark. 2 stretches are compositionally biased toward polar residues: residues 10–19 (PQESLTSYFE) and 28–38 (YGSQNKDSDSS). 263 to 270 (GFPSSGKS) contacts ATP.

In the N-terminal section; belongs to the DNA 3' phosphatase family.

Its subcellular location is the nucleus. It catalyses the reaction a 3'end (2'-deoxyribonucleotide 3'-phosphate)-DNA + H2O = a 3'-end 2'-deoxyribonucleotide-DNA + phosphate. The catalysed reaction is a 5'-end dephospho-2'-deoxyribonucleoside-DNA + ATP = a 5'-end 5'-phospho-2'-deoxyribonucleoside-DNA + ADP + H(+). Functionally, catalyzes the phosphorylation of DNA at 5'-hydroxyl termini and can dephosphorylate its 3'-phosphate termini. Has a role in the repair of breaks in single-stranded DNA. This chain is Bifunctional polynucleotide phosphatase/kinase (pnk1), found in Schizosaccharomyces pombe (strain 972 / ATCC 24843) (Fission yeast).